Reading from the N-terminus, the 448-residue chain is Mitochondrial distribution and morphology protein 10 (448 aa).

This sequence belongs to the MDM10 family. In terms of assembly, component of the ER-mitochondria encounter structure (ERMES) or MDM complex, composed of MMM1, MDM10, MDM12 and MDM34. Associates with the mitochondrial outer membrane sorting assembly machinery SAM(core) complex.

The protein localises to the mitochondrion outer membrane. Its function is as follows. Component of the ERMES/MDM complex, which serves as a molecular tether to connect the endoplasmic reticulum and mitochondria. Components of this complex are involved in the control of mitochondrial shape and protein biogenesis and may function in phospholipid exchange. MDM10 is involved in the late assembly steps of the general translocase of the mitochondrial outer membrane (TOM complex). Functions in the TOM40-specific route of the assembly of outer membrane beta-barrel proteins, including the association of TOM40 with the receptor TOM22 and small TOM proteins. Can associate with the SAM(core) complex as well as the MDM12-MMM1 complex, both involved in late steps of the major beta-barrel assembly pathway, that is responsible for biogenesis of all outer membrane beta-barrel proteins. May act as a switch that shuttles between both complexes and channels precursor proteins into the TOM40-specific pathway. Plays a role in mitochondrial morphology and in the inheritance of mitochondria. The sequence is that of Mitochondrial distribution and morphology protein 10 from Zygosaccharomyces rouxii (strain ATCC 2623 / CBS 732 / NBRC 1130 / NCYC 568 / NRRL Y-229).